An 88-amino-acid chain; its full sequence is Apolipoprotein C-I (88 aa).

A signal peptide spans 1-26; sequence MRLFIALPVLIVVVAMTLEGPAPAQA.

This sequence belongs to the apolipoprotein C1 family. As to expression, adult and fetal liver.

The protein resides in the secreted. Inhibitor of lipoprotein binding to the low density lipoprotein (LDL) receptor, LDL receptor-related protein, and very low density lipoprotein (VLDL) receptor. Associates with high density lipoproteins (HDL) and the triacylglycerol-rich lipoproteins in the plasma and makes up about 10% of the protein of the VLDL and 2% of that of HDL. Appears to interfere directly with fatty acid uptake and is also the major plasma inhibitor of cholesteryl ester transfer protein (CETP). Modulates the interaction of APOE with beta-migrating VLDL and inhibits binding of beta-VLDL to the LDL receptor-related protein. Binds free fatty acids and reduces their intracellular esterification. The chain is Apolipoprotein C-I (Apoc1) from Mus musculus (Mouse).